We begin with the raw amino-acid sequence, 323 residues long: Isoeugenol synthase 1 (323 aa).

Residues 14–17, 36–47, 88–90, 113–115, K135, and 155–157 contribute to the NADP(+) site; these read TGYL, VMPLKKNSDDSK, VPQ, SEF, and NSL. K135 serves as the catalytic Proton donor/acceptor.

It belongs to the NmrA-type oxidoreductase family. In terms of tissue distribution, expressed in flowers, especially in corolla and tubes of petals, probably in both epidermal and mesophyll cell layers.

It carries out the reaction (E)-isoeugenol + acetate + NADP(+) = (E)-coniferyl acetate + NADPH. It functions in the pathway aromatic compound metabolism; phenylpropanoid biosynthesis. With respect to regulation, inhibited by zinc and copper ions. Repressed by 4-bromo-cinnamyl acetate. Involved in the biosynthesis of the floral volatile isoeugenol. Catalyzes the synthesis of the phenylpropene isoeugenol from coniferyl acetate. Phenylpropenes are the primary constituents of various essential plant oils. They are produced as antimicrobial and antianimal compounds, or as floral attractants of pollinators. Isoeugenol is a characteristic aromatic constituent of spices and a floral volatile compound. In Petunia hybrida (Petunia), this protein is Isoeugenol synthase 1.